Consider the following 268-residue polypeptide: LOB domain-containing protein 13 (268 aa).

The LOB domain maps to 51 to 152 (TPCAACKLLR…SELTTVRTEI (102 aa)). Residues 191 to 268 (LLPPPPPPPP…SSDNNVHYFD (78 aa)) are disordered. 2 stretches are compositionally biased toward pro residues: residues 192 to 205 (LPPP…PRPP) and 212 to 222 (PAPPPTPPVSL). Over residues 223–243 (PSPSMVVSSSSSSNSSATNSM) the composition is skewed to low complexity. A compositionally biased stretch (polar residues) spans 250 to 268 (STAGYSNSLSSDNNVHYFD).

Belongs to the LOB domain-containing protein family. As to expression, expressed in shoots and roots and at low levels in flowers, but not in leaves or inflorescence stems.

The protein is LOB domain-containing protein 13 (LBD13) of Arabidopsis thaliana (Mouse-ear cress).